The chain runs to 441 residues: Polycomb protein EED (441 aa).

The interval 1–72 (MSEREVSTVP…PGRKSWGKGK (72 aa)) is disordered. N-acetylserine is present on Ser-2. Phosphoserine occurs at positions 2 and 34. A compositionally biased stretch (polar residues) spans 45-61 (ESGTNTERPDTPTNTPN). Thr-55 bears the Phosphothreonine mark. Lys-66 carries the post-translational modification N6,N6,N6-trimethyllysine; alternate. Lys-66 carries the post-translational modification N6,N6-dimethyllysine; alternate. Position 66 is an N6-methyllysine; alternate (Lys-66). An interaction with EZH2 region spans residues 81–441 (SFKCVNSLKE…ASIWRWDRLR (361 aa)). WD repeat units lie at residues 91-134 (DHNQ…EIRL), 142-185 (DADE…CIKH), 188-228 (GHGN…LVAI), and 234-275 (GHRD…NAIK). Lys-197, Lys-268, and Lys-284 each carry N6,N6,N6-trimethyllysine; alternate. N6,N6-dimethyllysine; alternate is present on residues Lys-197, Lys-268, and Lys-284. N6-methyllysine; alternate occurs at positions 197, 268, and 284. WD repeat units follow at residues 304–341 (IHRN…DDID), 359–399 (SQCD…PHKA), and 408–441 (KCGA…DRLR).

The protein belongs to the WD repeat ESC family. In terms of assembly, component of the PRC2/EED-EZH2 complex, which includes EED, EZH2, SUZ12, RBBP4 and RBBP7 and possibly AEBP2. The minimum components required for methyltransferase activity of the PRC2/EED-EZH2 complex are EED, EZH2 and SUZ12. Component of the PRC2/EED-EZH1 complex, which includes EED, EZH1, SUZ12, RBBP4 and AEBP2. The PRC2 complex may also interact with DNMT1, DNMT3A, DNMT3B and PHF1 via the EZH2 subunit and with SIRT1 via the SUZ12 subunit. Interacts with HDAC, HDAC2, histone H1, KMT2A/MLL1 and YY1. May interact with ITGA4, ITGAE and ITGB7. Interacts with CDYL. Interacts with BMAL1. In terms of processing, methylated. Binding to histone H1 'Lys-26' promotes mono-, di-, and trimethylation of internal lysines.

The protein localises to the nucleus. Its function is as follows. Polycomb group (PcG) protein. Component of the PRC2/EED-EZH2 complex, which methylates 'Lys-9' and 'Lys-27' of histone H3, leading to transcriptional repression of the affected target gene. Also recognizes 'Lys-26' trimethylated histone H1 with the effect of inhibiting PRC2 complex methyltransferase activity on nucleosomal histone H3 'Lys-27', whereas H3 'Lys-27' recognition has the opposite effect, enabling the propagation of this repressive mark. The PRC2/EED-EZH2 complex may also serve as a recruiting platform for DNA methyltransferases, thereby linking two epigenetic repression systems. This is Polycomb protein EED (EED) from Bos taurus (Bovine).